The primary structure comprises 156 residues: dCTP deaminase (156 aa).

DCTP contacts are provided by residues 79-84 (RSSLAR), Asp95, Gln124, and Tyr138.

This sequence belongs to the dCTP deaminase family. Homotrimer.

The enzyme catalyses dCTP + H2O + H(+) = dUTP + NH4(+). It functions in the pathway pyrimidine metabolism; dUMP biosynthesis; dUMP from dCTP (dUTP route): step 1/2. Catalyzes the deamination of dCTP to dUTP. The chain is dCTP deaminase from Pyrococcus horikoshii (strain ATCC 700860 / DSM 12428 / JCM 9974 / NBRC 100139 / OT-3).